A 573-amino-acid chain; its full sequence is Dihydroxy-acid dehydratase (573 aa).

Cys-62 is a [2Fe-2S] cluster binding site. Asp-94 lines the Mg(2+) pocket. Cys-135 provides a ligand contact to [2Fe-2S] cluster. The Mg(2+) site is built by Asp-136 and Lys-137. Position 137 is an N6-carboxylysine (Lys-137). Cys-212 is a [2Fe-2S] cluster binding site. Glu-463 is a binding site for Mg(2+). The active-site Proton acceptor is Ser-489.

It belongs to the IlvD/Edd family. In terms of assembly, homodimer. Requires [2Fe-2S] cluster as cofactor. The cofactor is Mg(2+).

The catalysed reaction is (2R)-2,3-dihydroxy-3-methylbutanoate = 3-methyl-2-oxobutanoate + H2O. The enzyme catalyses (2R,3R)-2,3-dihydroxy-3-methylpentanoate = (S)-3-methyl-2-oxopentanoate + H2O. Its pathway is amino-acid biosynthesis; L-isoleucine biosynthesis; L-isoleucine from 2-oxobutanoate: step 3/4. It participates in amino-acid biosynthesis; L-valine biosynthesis; L-valine from pyruvate: step 3/4. Its function is as follows. Functions in the biosynthesis of branched-chain amino acids. Catalyzes the dehydration of (2R,3R)-2,3-dihydroxy-3-methylpentanoate (2,3-dihydroxy-3-methylvalerate) into 2-oxo-3-methylpentanoate (2-oxo-3-methylvalerate) and of (2R)-2,3-dihydroxy-3-methylbutanoate (2,3-dihydroxyisovalerate) into 2-oxo-3-methylbutanoate (2-oxoisovalerate), the penultimate precursor to L-isoleucine and L-valine, respectively. The protein is Dihydroxy-acid dehydratase of Arthrobacter sp. (strain FB24).